We begin with the raw amino-acid sequence, 1131 residues long: Inositol hexakisphosphate and diphosphoinositol-pentakisphosphate kinase 2 (1131 aa).

Residues 21–53 are disordered; it reads DELLDQSKPENLDNLYEHTEDEEDEEDDEYDSP. A compositionally biased stretch (basic and acidic residues) spans 25–38; the sequence is DQSKPENLDNLYEH. The segment covering 39 to 52 has biased composition (acidic residues); the sequence is TEDEEDEEDDEYDS. Residue 67–68 participates in substrate binding; sequence KK. ATP-binding positions include R148, K201, H208, R227, 251 to 254, and 260 to 262; these read EEFM and DVK. Substrate is bound at residue 227–228; the sequence is RK. 2 residues coordinate substrate: K262 and R276. Residues S278, D323, and 335-337 each bind ATP; that span reads DVN. 340–343 lines the substrate pocket; the sequence is SFVK. The interval 385 to 456 is polyphosphoinositide-binding domain; sequence PTTSGTKMEL…VLDIARQLLV (72 aa). Residues 912–951 form a disordered region; that stretch reads KGCEEDKNLPSGFGYRPASQENESSKKHTHANDSDEDLGV. Over residues 934-951 the composition is skewed to basic and acidic residues; that stretch reads ESSKKHTHANDSDEDLGV.

It belongs to the histidine acid phosphatase family. VIP1 subfamily.

The protein resides in the cytoplasm. Its subcellular location is the cytosol. The catalysed reaction is 1D-myo-inositol hexakisphosphate + ATP = 1-diphospho-1D-myo-inositol 2,3,4,5,6-pentakisphosphate + ADP. The enzyme catalyses 5-diphospho-1D-myo-inositol 1,2,3,4,6-pentakisphosphate + ATP + H(+) = 1,5-bis(diphospho)-1D-myo-inositol 2,3,4,6-tetrakisphosphate + ADP. In terms of biological role, bifunctional inositol kinase that acts in concert with the IP6K kinases IP6K1, IP6K2 and IP6K3 to synthesize the diphosphate group-containing inositol pyrophosphates diphosphoinositol pentakisphosphate, PP-InsP5, and bis-diphosphoinositol tetrakisphosphate, (PP)2-InsP4. PP-InsP5 and (PP)2-InsP4, also respectively called InsP7 and InsP8, regulate a variety of cellular processes, including apoptosis, vesicle trafficking, cytoskeletal dynamics, exocytosis, insulin signaling and neutrophil activation. Phosphorylates inositol hexakisphosphate (InsP6) at position 1 to produce PP-InsP5 which is in turn phosphorylated by IP6Ks to produce (PP)2-InsP4. Alternatively, phosphorylates PP-InsP5 at position 1, produced by IP6Ks from InsP6, to produce (PP)2-InsP4. This is Inositol hexakisphosphate and diphosphoinositol-pentakisphosphate kinase 2 from Xenopus laevis (African clawed frog).